A 439-amino-acid chain; its full sequence is Phenylacetate-coenzyme A ligase (439 aa).

It belongs to the phenylacetyl-CoA ligase family. As to quaternary structure, monomer.

It catalyses the reaction 2-phenylacetate + ATP + CoA = phenylacetyl-CoA + AMP + diphosphate. It participates in aromatic compound metabolism; phenylacetate degradation. With respect to regulation, inhibited by divalent cations (zinc, copper, mercury) and by the sulfhydryl reagents 5,5-dithiobis(2-nitrobenzoic acid), N-ethylmaleimide and p-chloromercuribenzoate. Functionally, catalyzes the activation of phenylacetic acid (PA) to phenylacetyl-CoA (PA-CoA). Involved in the phenylalanine metabolism. Can also use CTP and UTP as substrate. In Pseudomonas putida (Arthrobacter siderocapsulatus), this protein is Phenylacetate-coenzyme A ligase (paaK).